The sequence spans 646 residues: Heat shock 70 kDa protein (646 aa).

Residues 613–632 (GGAPGGMPGAAPGGFPGGAP) show a composition bias toward gly residues. The tract at residues 613–646 (GGAPGGMPGAAPGGFPGGAPGSNDNEGPTVEEVD) is disordered.

It belongs to the heat shock protein 70 family.

The protein is Heat shock 70 kDa protein (hsps-1) of Neurospora crassa (strain ATCC 24698 / 74-OR23-1A / CBS 708.71 / DSM 1257 / FGSC 987).